A 225-amino-acid polypeptide reads, in one-letter code: Urease accessory protein UreE (225 aa).

A compositionally biased stretch (basic and acidic residues) spans 171 to 215 (HHGHEHSHDHEHGHSHAAHEHSHGHDHTHGHDHDHGDHVHDESCG). The segment at 171-225 (HHGHEHSHDHEHGHSHAAHEHSHGHDHTHGHDHDHGDHVHDESCGHGHHHHHAHR) is disordered. Basic residues predominate over residues 216 to 225 (HGHHHHHAHR).

Belongs to the UreE family.

The protein localises to the cytoplasm. Involved in urease metallocenter assembly. Binds nickel. Probably functions as a nickel donor during metallocenter assembly. The protein is Urease accessory protein UreE of Paraburkholderia xenovorans (strain LB400).